Consider the following 94-residue polypeptide: Small ubiquitin-related modifier 3-like (94 aa).

Residue Lys11 forms a Glycyl lysine isopeptide (Lys-Gly) (interchain with G-Cter in SUMO) linkage. The region spanning 15-92 (DHINLKVAGQ…IDVFQQQTGG (78 aa)) is the Ubiquitin-like domain. Gly92 participates in a covalent cross-link: Glycyl lysine isopeptide (Gly-Lys) (interchain with K-? in acceptor proteins). The propeptide occupies 93-94 (SC).

The protein belongs to the ubiquitin family. SUMO subfamily. As to quaternary structure, interacts with sae2 and ube2i. Covalently attached to a number of proteins. Polymeric chains can be formed through Lys-11 cross-linking. In terms of processing, cleavage of precursor form by a sentrin-specific protease is necessary for function.

The protein resides in the cytoplasm. It localises to the nucleus. The protein localises to the PML body. Its function is as follows. Ubiquitin-like protein which can be covalently attached to target lysines either as a monomer or as a lysine-linked polymer. Does not seem to be involved in protein degradation and may function as an antagonist of ubiquitin in the degradation process. Plays a role in a number of cellular processes such as nuclear transport, DNA replication and repair, mitosis and signal transduction. Covalent attachment to its substrates requires prior activation by the E1 complex sae1-sae2 and linkage to the E2 enzyme ube2i. In Danio rerio (Zebrafish), this protein is Small ubiquitin-related modifier 3-like (sumo3l).